Consider the following 400-residue polypeptide: Enoyl-[acyl-carrier-protein] reductase [NADH] (400 aa).

Residues 48 to 53 (GASSGY), 74 to 75 (FE), 111 to 112 (DA), and 139 to 140 (LA) each bind NAD(+). Tyrosine 225 contributes to the substrate binding site. The active-site Proton donor is the tyrosine 235. Residues lysine 244 and 273–275 (VVT) contribute to the NAD(+) site.

It belongs to the TER reductase family. Monomer.

The enzyme catalyses a 2,3-saturated acyl-[ACP] + NAD(+) = a (2E)-enoyl-[ACP] + NADH + H(+). It participates in lipid metabolism; fatty acid biosynthesis. Involved in the final reduction of the elongation cycle of fatty acid synthesis (FAS II). Catalyzes the reduction of a carbon-carbon double bond in an enoyl moiety that is covalently linked to an acyl carrier protein (ACP). This is Enoyl-[acyl-carrier-protein] reductase [NADH] from Marinomonas sp. (strain MWYL1).